A 215-amino-acid chain; its full sequence is MNIIKPLTCILAMSISGLATAAVTLHVPDDVTLFVANGQKAKLSGSLFASSKTIELPNGENQIVFQYEPYFSQGNDRIGVESNVIIAKFSANDTDLNFELPKYRDHRVAEQEIKQMQWQLVDEQGAAVTKSEDKLVKSGMQIGRDYAREAADYNQTGGIAAIGTAVSVATIKTEPVADVETKVKAGDNTAEEMLHFWYDKADEATKARFKAYINQ.

A signal peptide spans 1–21; the sequence is MNIIKPLTCILAMSISGLATA.

This sequence belongs to the UPF0319 family.

This is UPF0319 protein VVA1446 from Vibrio vulnificus (strain YJ016).